The chain runs to 261 residues: Triosephosphate isomerase (261 aa).

10–12 contacts substrate; it reads NWK. H100 (electrophile) is an active-site residue. Residue E172 is the Proton acceptor of the active site. Substrate-binding positions include G178, S218, and 239–240; that span reads GG.

It belongs to the triosephosphate isomerase family. Homodimer.

It is found in the cytoplasm. The catalysed reaction is D-glyceraldehyde 3-phosphate = dihydroxyacetone phosphate. The protein operates within carbohydrate biosynthesis; gluconeogenesis. Its pathway is carbohydrate degradation; glycolysis; D-glyceraldehyde 3-phosphate from glycerone phosphate: step 1/1. Involved in the gluconeogenesis. Catalyzes stereospecifically the conversion of dihydroxyacetone phosphate (DHAP) to D-glyceraldehyde-3-phosphate (G3P). This chain is Triosephosphate isomerase, found in Nocardia farcinica (strain IFM 10152).